A 231-amino-acid polypeptide reads, in one-letter code: ATP-dependent dethiobiotin synthetase BioD (231 aa).

Position 13-18 (13-18 (DVGKTV)) interacts with ATP. T17 serves as a coordination point for Mg(2+). The active site involves K38. Residues D55, 116–119 (EGAG), and 176–177 (NR) each bind ATP. Residues D55 and E116 each coordinate Mg(2+).

Belongs to the dethiobiotin synthetase family. In terms of assembly, homodimer. The cofactor is Mg(2+).

It localises to the cytoplasm. The catalysed reaction is (7R,8S)-7,8-diammoniononanoate + CO2 + ATP = (4R,5S)-dethiobiotin + ADP + phosphate + 3 H(+). The protein operates within cofactor biosynthesis; biotin biosynthesis; biotin from 7,8-diaminononanoate: step 1/2. In terms of biological role, catalyzes a mechanistically unusual reaction, the ATP-dependent insertion of CO2 between the N7 and N8 nitrogen atoms of 7,8-diaminopelargonic acid (DAPA, also called 7,8-diammoniononanoate) to form a ureido ring. The chain is ATP-dependent dethiobiotin synthetase BioD from Vibrio cholerae serotype O1 (strain ATCC 39315 / El Tor Inaba N16961).